Reading from the N-terminus, the 174-residue chain is Ubiquitin-fold modifier-conjugating enzyme 1 (174 aa).

The Glycyl thioester intermediate role is filled by cysteine 119.

It belongs to the ubiquitin-conjugating enzyme family. UFC1 subfamily.

Functionally, E2-like enzyme which forms an intermediate with UFM1 via a thioester linkage. This Arabidopsis thaliana (Mouse-ear cress) protein is Ubiquitin-fold modifier-conjugating enzyme 1.